A 389-amino-acid chain; its full sequence is Na(+)/H(+) antiporter NhaA (389 aa).

11 consecutive transmembrane segments (helical) span residues 24–44 (ILLI…AGPA), 56–76 (LSIE…FVGL), 94–114 (LLPI…HYTL), 122–142 (AGTG…LALL), 152–172 (VFLT…IAMF), 176–196 (QFSL…LVLN), 216–236 (FLML…AFAI), 259–279 (PVAF…VIGS), 291–311 (LGII…LSFV), 326–346 (WTHI…SIFI), and 363–383 (MAIL…LSFF).

Belongs to the NhaA Na(+)/H(+) (TC 2.A.33) antiporter family.

Its subcellular location is the cell inner membrane. It catalyses the reaction Na(+)(in) + 2 H(+)(out) = Na(+)(out) + 2 H(+)(in). Functionally, na(+)/H(+) antiporter that extrudes sodium in exchange for external protons. The chain is Na(+)/H(+) antiporter NhaA from Dechloromonas aromatica (strain RCB).